A 910-amino-acid chain; its full sequence is Protein translocase subunit SecA 1 (910 aa).

Residues glutamine 86, 104–108, and aspartate 512 each bind ATP; that span reads GEGKT. Positions 894, 896, 905, and 906 each coordinate Zn(2+).

This sequence belongs to the SecA family. Monomer and homodimer. Part of the essential Sec protein translocation apparatus which comprises SecA, SecYEG and auxiliary proteins SecDF-YajC and YidC. Requires Zn(2+) as cofactor.

It is found in the cell inner membrane. It localises to the cytoplasm. It carries out the reaction ATP + H2O + cellular proteinSide 1 = ADP + phosphate + cellular proteinSide 2.. Part of the Sec protein translocase complex. Interacts with the SecYEG preprotein conducting channel. Has a central role in coupling the hydrolysis of ATP to the transfer of proteins into and across the cell membrane, serving both as a receptor for the preprotein-SecB complex and as an ATP-driven molecular motor driving the stepwise translocation of polypeptide chains across the membrane. This Bordetella avium (strain 197N) protein is Protein translocase subunit SecA 1.